Here is a 133-residue protein sequence, read N- to C-terminus: ATP synthase epsilon chain, chloroplastic (133 aa).

Belongs to the ATPase epsilon chain family. As to quaternary structure, F-type ATPases have 2 components, CF(1) - the catalytic core - and CF(0) - the membrane proton channel. CF(1) has five subunits: alpha(3), beta(3), gamma(1), delta(1), epsilon(1). CF(0) has three main subunits: a, b and c.

Its subcellular location is the plastid. The protein resides in the chloroplast thylakoid membrane. Its function is as follows. Produces ATP from ADP in the presence of a proton gradient across the membrane. This is ATP synthase epsilon chain, chloroplastic from Citrus sinensis (Sweet orange).